A 555-amino-acid polypeptide reads, in one-letter code: Chaperonin GroEL (555 aa).

ATP-binding positions include 29–32 (TLGP), Lys-50, 86–90 (DGTTT), Gly-418, and Asp-499. Positions 528–555 (HEEDNNTGNRSGGGVGGGHHGGMGGMDF) are disordered. Positions 537-555 (RSGGGVGGGHHGGMGGMDF) are enriched in gly residues.

Belongs to the chaperonin (HSP60) family. As to quaternary structure, forms a cylinder of 14 subunits composed of two heptameric rings stacked back-to-back. Interacts with the co-chaperonin GroES.

Its subcellular location is the cytoplasm. It catalyses the reaction ATP + H2O + a folded polypeptide = ADP + phosphate + an unfolded polypeptide.. Together with its co-chaperonin GroES, plays an essential role in assisting protein folding. The GroEL-GroES system forms a nano-cage that allows encapsulation of the non-native substrate proteins and provides a physical environment optimized to promote and accelerate protein folding. The chain is Chaperonin GroEL from Orientia tsutsugamushi (strain Ikeda) (Rickettsia tsutsugamushi).